Reading from the N-terminus, the 194-residue chain is Ribonuclease HII (194 aa).

The 191-residue stretch at isoleucine 3 to leucine 193 folds into the RNase H type-2 domain. 3 residues coordinate a divalent metal cation: aspartate 9, glutamate 10, and aspartate 101.

The protein belongs to the RNase HII family. It depends on Mn(2+) as a cofactor. Requires Mg(2+) as cofactor.

Its subcellular location is the cytoplasm. The catalysed reaction is Endonucleolytic cleavage to 5'-phosphomonoester.. Functionally, endonuclease that specifically degrades the RNA of RNA-DNA hybrids. This chain is Ribonuclease HII (rnhB), found in Neisseria meningitidis serogroup B (strain ATCC BAA-335 / MC58).